Consider the following 40-residue polypeptide: Bomanin Short 6 (40 aa).

A signal peptide spans 1 to 18 (MKLLSITFLFGLLALASA). Residues 19 to 23 (NPLSP) constitute a propeptide, removed by a dipeptidylpeptidase. Cys32 and Cys35 are joined by a disulfide.

The protein belongs to the bomanin family.

It localises to the secreted. Its function is as follows. Secreted immune-induced peptide induced by Toll signaling. Has a role in resistance to bacterial and fungal infections. The strength of antimicrobial activity appears to correlate with the overall level of expression. The chain is Bomanin Short 6 from Drosophila melanogaster (Fruit fly).